Here is a 192-residue protein sequence, read N- to C-terminus: Erythropoietin (192 aa).

Residues 1–26 (MGVPDCLALPLLVTFLLLSLGLPVLG) form the signal peptide. Cys33 and Cys187 form a disulfide bridge. 3 N-linked (GlcNAc...) asparagine glycosylation sites follow: Asn50, Asn64, and Asn109.

Belongs to the EPO/TPO family.

Its subcellular location is the secreted. In terms of biological role, hormone involved in the regulation of erythrocyte proliferation and differentiation and the maintenance of a physiological level of circulating erythrocyte mass. Binds to EPOR leading to EPOR dimerization and JAK2 activation thereby activating specific downstream effectors, including STAT1 and STAT3. This Spalax golani (Golan Heights blind mole rat) protein is Erythropoietin (EPO).